Consider the following 338-residue polypeptide: Homeobox protein ceh-20 (338 aa).

Positions 4-187 (THPANLSELL…VMILRSRFLD (184 aa)) constitute a PBC domain. The segment at 11 to 91 (ELLDAVLKIN…EGVAGPDKGG (81 aa)) is PBC-A. The PBC-B stretch occupies residues 94–187 (GSDASGGDQA…VMILRSRFLD (94 aa)). The homeobox; TALE-type DNA-binding region spans 188–250 (ARRKRRNFSK…NKRIRYKKNM (63 aa)).

It belongs to the TALE/PBX homeobox family. As to quaternary structure, interacts with Meis protein psa-3. Interacts with homeobox protein nob-1. In terms of tissue distribution, expressed in head dopaminergic neurons.

The protein localises to the nucleus. In terms of biological role, transcription factor that binds to the 5'-TGATNNAT(G/T)(G/A)-3' PBC/Hox lineage enhancer region of sem-2 to promote cell fate specification in the postembryonic mesoderm (also known as the M lineage). Required for the M lineage-specific expression of the transcription factor, mls-2. Required for asymmetric division of the T hypodermal cell, probably acting via the regulation of asymmetric expression of Meis protein psa-3 in concert with homeobox protein nob-1 and the Wnt-MAPK pathway. Has a role in the mig-13 pathway to promote the guidance, migration and positioning of Q neuroblasts and their descendants along the anteroposterior body axis and the anterior migration of BDU interneurons. Also required for normal vulval formation. Plays a role in regulating gene expression in dopaminergic neurons, acting in midbody PDE neurons, and acting redundantly with ceh-40 in head neurons. May activate dopamine pathway genes in concert with ETS domain-containing protein ast-1, and homeobox proteins ceh-43 and ceh-40. This chain is Homeobox protein ceh-20, found in Caenorhabditis elegans.